Reading from the N-terminus, the 256-residue chain is Thiazole synthase (256 aa).

Lys-96 (schiff-base intermediate with DXP) is an active-site residue. 1-deoxy-D-xylulose 5-phosphate is bound by residues Gly-157, 183–184 (AG), and 205–206 (NT).

The protein belongs to the ThiG family. Homotetramer. Forms heterodimers with either ThiH or ThiS.

Its subcellular location is the cytoplasm. The catalysed reaction is [ThiS sulfur-carrier protein]-C-terminal-Gly-aminoethanethioate + 2-iminoacetate + 1-deoxy-D-xylulose 5-phosphate = [ThiS sulfur-carrier protein]-C-terminal Gly-Gly + 2-[(2R,5Z)-2-carboxy-4-methylthiazol-5(2H)-ylidene]ethyl phosphate + 2 H2O + H(+). It functions in the pathway cofactor biosynthesis; thiamine diphosphate biosynthesis. Its function is as follows. Catalyzes the rearrangement of 1-deoxy-D-xylulose 5-phosphate (DXP) to produce the thiazole phosphate moiety of thiamine. Sulfur is provided by the thiocarboxylate moiety of the carrier protein ThiS. In vitro, sulfur can be provided by H(2)S. The polypeptide is Thiazole synthase (Bacillus cereus (strain 03BB102)).